Reading from the N-terminus, the 207-residue chain is LexA repressor (207 aa).

Residues 28–48 constitute a DNA-binding region (H-T-H motif); the sequence is VREIAVAVGLASSSTVHGHLE. Active-site for autocatalytic cleavage activity residues include Ser-129 and Lys-167.

It belongs to the peptidase S24 family. Homodimer.

The enzyme catalyses Hydrolysis of Ala-|-Gly bond in repressor LexA.. In terms of biological role, represses a number of genes involved in the response to DNA damage (SOS response), including recA and lexA. In the presence of single-stranded DNA, RecA interacts with LexA causing an autocatalytic cleavage which disrupts the DNA-binding part of LexA, leading to derepression of the SOS regulon and eventually DNA repair. The sequence is that of LexA repressor from Oceanobacillus iheyensis (strain DSM 14371 / CIP 107618 / JCM 11309 / KCTC 3954 / HTE831).